Here is a 248-residue protein sequence, read N- to C-terminus: Ras-like protein family member 11B (248 aa).

The interval 29 to 246 is small GTPase-like; the sequence is AGRRLVKIAV…ALSAKVRTVT (218 aa). GTP contacts are provided by residues 40–47, 87–94, and 152–155; these read GASGVGKT, DTPGIQVH, and NKAD. Residues 205-226 are disordered; it reads QQPSSTPEKRRTSLIPRPKSPN.

It belongs to the small GTPase superfamily. Ras family. Widely expressed with highest levels in placenta and primary macrophages.

It carries out the reaction GTP + H2O = GDP + phosphate + H(+). The polypeptide is Ras-like protein family member 11B (Homo sapiens (Human)).